Here is a 297-residue protein sequence, read N- to C-terminus: GTP cyclohydrolase FolE2 (297 aa).

Disordered regions lie at residues 1–21 and 180–207; these read MTHASALGLTQHIPDTQSERD and IRAELMEPPGDRRRPPPPGGGESTRERP.

Belongs to the GTP cyclohydrolase IV family.

It catalyses the reaction GTP + H2O = 7,8-dihydroneopterin 3'-triphosphate + formate + H(+). It participates in cofactor biosynthesis; 7,8-dihydroneopterin triphosphate biosynthesis; 7,8-dihydroneopterin triphosphate from GTP: step 1/1. In terms of biological role, converts GTP to 7,8-dihydroneopterin triphosphate. This Methylibium petroleiphilum (strain ATCC BAA-1232 / LMG 22953 / PM1) protein is GTP cyclohydrolase FolE2.